Consider the following 223-residue polypeptide: Putative NAD(P)H nitroreductase SAUSA300_2462 (223 aa).

Belongs to the nitroreductase family. FMN serves as cofactor.

The polypeptide is Putative NAD(P)H nitroreductase SAUSA300_2462 (Staphylococcus aureus (strain USA300)).